We begin with the raw amino-acid sequence, 149 residues long: UPF0178 protein VF_0601 (149 aa).

It belongs to the UPF0178 family.

The sequence is that of UPF0178 protein VF_0601 from Aliivibrio fischeri (strain ATCC 700601 / ES114) (Vibrio fischeri).